The primary structure comprises 644 residues: Exoribonuclease 2 (644 aa).

The RNB domain occupies 189 to 516; the sequence is REDLTALDFV…NHRLLKAVIK (328 aa). In terms of domain architecture, S1 motif spans 561-643; it reads DTRFAAEIVD…ETRSIIARPV (83 aa).

This sequence belongs to the RNR ribonuclease family. RNase II subfamily.

The protein localises to the cytoplasm. The enzyme catalyses Exonucleolytic cleavage in the 3'- to 5'-direction to yield nucleoside 5'-phosphates.. Involved in mRNA degradation. Hydrolyzes single-stranded polyribonucleotides processively in the 3' to 5' direction. This is Exoribonuclease 2 from Shigella dysenteriae serotype 1 (strain Sd197).